Reading from the N-terminus, the 129-residue chain is Large ribosomal subunit protein uL22 (129 aa).

This sequence belongs to the universal ribosomal protein uL22 family. Part of the 50S ribosomal subunit.

In terms of biological role, this protein binds specifically to 23S rRNA; its binding is stimulated by other ribosomal proteins, e.g. L4, L17, and L20. It is important during the early stages of 50S assembly. It makes multiple contacts with different domains of the 23S rRNA in the assembled 50S subunit and ribosome. Functionally, the globular domain of the protein is located near the polypeptide exit tunnel on the outside of the subunit, while an extended beta-hairpin is found that lines the wall of the exit tunnel in the center of the 70S ribosome. The polypeptide is Large ribosomal subunit protein uL22 (Rhizobium etli (strain ATCC 51251 / DSM 11541 / JCM 21823 / NBRC 15573 / CFN 42)).